A 620-amino-acid chain; its full sequence is Arginine--tRNA ligase (620 aa).

Residues 147-157 (ANPTGPIHIGG) carry the 'HIGH' region motif.

Belongs to the class-I aminoacyl-tRNA synthetase family. As to quaternary structure, monomer.

The protein resides in the cytoplasm. It carries out the reaction tRNA(Arg) + L-arginine + ATP = L-arginyl-tRNA(Arg) + AMP + diphosphate. This is Arginine--tRNA ligase from Bifidobacterium longum (strain NCC 2705).